A 396-amino-acid polypeptide reads, in one-letter code: Smad nuclear-interacting protein 1 (396 aa).

Over residues 1–10 the composition is skewed to basic and acidic residues; it reads MKAVKSERER. Residues 1-227 form a disordered region; the sequence is MKAVKSERER…VPAKEKPSFE (227 aa). A Glycyl lysine isopeptide (Lys-Gly) (interchain with G-Cter in SUMO); alternate cross-link involves residue K30. K30 is covalently cross-linked (Glycyl lysine isopeptide (Lys-Gly) (interchain with G-Cter in SUMO1); alternate). A Glycyl lysine isopeptide (Lys-Gly) (interchain with G-Cter in SUMO2); alternate cross-link involves residue K30. Residues S35, S49, S52, and S54 each carry the phosphoserine modification. Phosphothreonine is present on T57. 2 positions are modified to phosphoserine: S58 and S99. The span at 77 to 105 shows a compositional bias: basic residues; the sequence is PPKKKNKASGRRSKSPRSKRNRSPHHSTV. The span at 107–142 shows a compositional bias: basic and acidic residues; the sequence is VKQEREDHPRRGREDRQHREPSEQEHRRARNSDRDR. A Glycyl lysine isopeptide (Lys-Gly) (interchain with G-Cter in SUMO2) cross-link involves residue K108. S153 is subject to Phosphoserine. A coiled-coil region spans residues 165-196; it reads RDRDTQNLQAQEEEREFYNARRREHRQRNDVG. S202 bears the Phosphoserine mark. The segment covering 213–225 has biased composition (basic and acidic residues); the sequence is NKEKEVPAKEKPS. K223 is covalently cross-linked (Glycyl lysine isopeptide (Lys-Gly) (interchain with G-Cter in SUMO2)). The FHA domain occupies 281–344; sequence YLLGRHRRIA…NGTFLNNKRI (64 aa). Residues 373-382 are compositionally biased toward basic and acidic residues; sequence SSDTSEIDRK. The segment at 373-396 is disordered; the sequence is SSDTSEIDRKDDEDEEEEEEVSDS. The segment covering 383 to 396 has biased composition (acidic residues); sequence DDEDEEEEEEVSDS. At S394 the chain carries Phosphoserine.

In terms of assembly, component of activated spliceosome complexes. Component of the minor spliceosome, which splices U12-type introns. Binds SMAD4 and CREBBP/EP300. Binds the SMAD1/OAZ1/PSMB4 complex. Interacts with DROSHA and SMARCA4. Component of the SNARP complex which consists at least of SNIP1, SNW1, THRAP3, BCLAF1 and PNN. In terms of processing, degraded by the proteasome upon binding to the SMAD1/OAZ1/PSMB4 complex. As to expression, ubiquitous, with highest expression in heart and skeletal muscle.

It is found in the nucleus. Functionally, required for pre-mRNA splicing as component of the spliceosome. As a component of the minor spliceosome, involved in the splicing of U12-type introns in pre-mRNAs. Down-regulates NF-kappa-B signaling by competing with RELA for CREBBP/EP300 binding. Involved in the microRNA (miRNA) biogenesis. May be involved in cyclin-D1/CCND1 mRNA stability through the SNARP complex which associates with both the 3'end of the CCND1 gene and its mRNA. In Homo sapiens (Human), this protein is Smad nuclear-interacting protein 1 (SNIP1).